The sequence spans 305 residues: Ornithine carbamoyltransferase, catabolic (305 aa).

Carbamoyl phosphate-binding positions include 50 to 53, Q77, R101, and 128 to 131; these read STRT and HPLQ. Residues N159, D223, and 227–228 contribute to the L-ornithine site; that span reads SM. Carbamoyl phosphate contacts are provided by residues 263–264 and R291; that span reads CL.

It belongs to the aspartate/ornithine carbamoyltransferase superfamily. OTCase family.

Its subcellular location is the cytoplasm. The enzyme catalyses carbamoyl phosphate + L-ornithine = L-citrulline + phosphate + H(+). It functions in the pathway amino-acid degradation; L-arginine degradation via ADI pathway; carbamoyl phosphate from L-arginine: step 2/2. In terms of biological role, reversibly catalyzes the transfer of the carbamoyl group from carbamoyl phosphate (CP) to the N(epsilon) atom of ornithine (ORN) to produce L-citrulline. In Thermoplasma acidophilum (strain ATCC 25905 / DSM 1728 / JCM 9062 / NBRC 15155 / AMRC-C165), this protein is Ornithine carbamoyltransferase, catabolic.